An 84-amino-acid polypeptide reads, in one-letter code: Exodeoxyribonuclease 7 small subunit (84 aa).

It belongs to the XseB family. In terms of assembly, heterooligomer composed of large and small subunits.

The protein localises to the cytoplasm. The enzyme catalyses Exonucleolytic cleavage in either 5'- to 3'- or 3'- to 5'-direction to yield nucleoside 5'-phosphates.. Functionally, bidirectionally degrades single-stranded DNA into large acid-insoluble oligonucleotides, which are then degraded further into small acid-soluble oligonucleotides. In Yersinia pseudotuberculosis serotype O:3 (strain YPIII), this protein is Exodeoxyribonuclease 7 small subunit.